The sequence spans 227 residues: Zeamatin (227 aa).

An N-terminal signal peptide occupies residues 1–20; that stretch reads MAGSVAIVGIFVALLAVAGE. Intrachain disulfides connect Cys-30-Cys-226, Cys-72-Cys-82, Cys-87-Cys-93, Cys-139-Cys-215, Cys-145-Cys-198, Cys-153-Cys-163, Cys-167-Cys-176, and Cys-177-Cys-185.

Belongs to the thaumatin family.

In terms of biological role, has antifungal activity. Inhibits Candida albicans and Trichoderma reesei; marginal inhibition observed against Alternaria solani and Neurospora crassa. The polypeptide is Zeamatin (Zlp) (Zea mays (Maize)).